A 252-amino-acid polypeptide reads, in one-letter code: Pimeloyl-[acyl-carrier protein] methyl ester esterase (252 aa).

Positions 15-239 (LVMLHGWAMH…FPHCGHAPFL (225 aa)) constitute an AB hydrolase-1 domain. Substrate is bound by residues Trp21, 81–82 (SL), and 143–147 (FLTLQ). Catalysis depends on Ser81, which acts as the Nucleophile. Residues Asp207 and His235 contribute to the active site. Substrate is bound at residue His235.

This sequence belongs to the AB hydrolase superfamily. Carboxylesterase BioH family. As to quaternary structure, monomer.

It is found in the cytoplasm. The catalysed reaction is 6-carboxyhexanoyl-[ACP] methyl ester + H2O = 6-carboxyhexanoyl-[ACP] + methanol + H(+). It participates in cofactor biosynthesis; biotin biosynthesis. Functionally, the physiological role of BioH is to remove the methyl group introduced by BioC when the pimeloyl moiety is complete. It allows to synthesize pimeloyl-ACP via the fatty acid synthetic pathway through the hydrolysis of the ester bonds of pimeloyl-ACP esters. The polypeptide is Pimeloyl-[acyl-carrier protein] methyl ester esterase (Nitrosomonas europaea (strain ATCC 19718 / CIP 103999 / KCTC 2705 / NBRC 14298)).